A 180-amino-acid chain; its full sequence is Large ribosomal subunit protein uL18m (180 aa).

Belongs to the universal ribosomal protein uL18 family. Component of the mitochondrial large ribosomal subunit (mt-LSU). Mature mammalian 55S mitochondrial ribosomes consist of a small (28S) and a large (39S) subunit. The 28S small subunit contains a 12S ribosomal RNA (12S mt-rRNA) and 30 different proteins. The 39S large subunit contains a 16S rRNA (16S mt-rRNA), a copy of mitochondrial valine transfer RNA (mt-tRNA(Val)), which plays an integral structural role, and 52 different proteins.

The protein resides in the mitochondrion. In terms of biological role, together with thiosulfate sulfurtransferase (TST), acts as a mitochondrial import factor for the cytosolic 5S rRNA. The precursor form shows RNA chaperone activity; is able to fold the 5S rRNA into an import-competent conformation that is recognized by rhodanese (TST). Both the cytoplasmic and mitochondrial forms are able to bind to the helix IV-loop D in the gamma domain of the 5S rRNA. In Homo sapiens (Human), this protein is Large ribosomal subunit protein uL18m (MRPL18).